The following is a 215-amino-acid chain: Eukaryotic translation initiation factor 4E-1A (215 aa).

Over residues 1–14 (MATAEPETSTNPSN) the composition is skewed to low complexity. The tract at residues 1 to 23 (MATAEPETSTNPSNSEEKNEENE) is disordered. MRNA is bound by residues 54–55 (WQ), 100–101 (WE), 155–160 (RTKGDK), and 203–205 (TKS).

The protein belongs to the eukaryotic initiation factor 4E family. Interacts with eif4ebp3l. Expressed in all tissues examined, including gill, fin, heart, intestine, muscle, ovary and testis.

It localises to the cytoplasm. It is found in the nucleus. Functionally, recognizes and binds the 7-methylguanosine (m7G)-containing mRNA cap during an early step in the initiation of protein synthesis and facilitates ribosome binding by inducing the unwinding of the mRNAs secondary structures. Also promotes export of a subset of mRNAs from the nucleus to the cytoplasm. This chain is Eukaryotic translation initiation factor 4E-1A, found in Danio rerio (Zebrafish).